The primary structure comprises 124 residues: Small ribosomal subunit protein uS12 (124 aa).

Residue D89 is modified to 3-methylthioaspartic acid.

The protein belongs to the universal ribosomal protein uS12 family. In terms of assembly, part of the 30S ribosomal subunit. Contacts proteins S8 and S17. May interact with IF1 in the 30S initiation complex.

Its function is as follows. With S4 and S5 plays an important role in translational accuracy. Interacts with and stabilizes bases of the 16S rRNA that are involved in tRNA selection in the A site and with the mRNA backbone. Located at the interface of the 30S and 50S subunits, it traverses the body of the 30S subunit contacting proteins on the other side and probably holding the rRNA structure together. The combined cluster of proteins S8, S12 and S17 appears to hold together the shoulder and platform of the 30S subunit. The sequence is that of Small ribosomal subunit protein uS12 from Vibrio vulnificus (strain CMCP6).